Here is a 656-residue protein sequence, read N- to C-terminus: Phosphoprotein 85 (656 aa).

Disordered regions lie at residues 1 to 174 (MSSR…EGDE) and 615 to 656 (NGNH…EYCC). Residues 46–55 (SATEDLDRME) are compositionally biased toward basic and acidic residues. Composition is skewed to low complexity over residues 59-70 (SPYSVSSDAPSS) and 140-160 (DNSSSGGSSSRTTSNSSRSTS). Over residues 625-634 (SPPPPLPPRD) the composition is skewed to pro residues. Basic and acidic residues predominate over residues 635-656 (YPQRDERDRHRRDRRDSGEYCC).

Belongs to the herpesviridae pp85 family. Phosphorylated.

Its subcellular location is the virion tegument. The protein localises to the host cytoplasm. The sequence is that of Phosphoprotein 85 (UL25) from Homo sapiens (Human).